The chain runs to 235 residues: Lipoprotein-releasing system ATP-binding protein LolD (235 aa).

The ABC transporter domain maps to 5-235; that stretch reads FALANIYKSF…SIDESGFNKI (231 aa). 40 to 47 serves as a coordination point for ATP; the sequence is GKSGSGKS.

It belongs to the ABC transporter superfamily. Lipoprotein translocase (TC 3.A.1.125) family. As to quaternary structure, the complex is composed of two ATP-binding proteins (LolD) and two transmembrane proteins (LolC and LolE).

It localises to the cell inner membrane. In terms of biological role, part of the ABC transporter complex LolCDE involved in the translocation of mature outer membrane-directed lipoproteins, from the inner membrane to the periplasmic chaperone, LolA. Responsible for the formation of the LolA-lipoprotein complex in an ATP-dependent manner. The polypeptide is Lipoprotein-releasing system ATP-binding protein LolD (Ehrlichia chaffeensis (strain ATCC CRL-10679 / Arkansas)).